The sequence spans 261 residues: Potassium/proton antiporter CemA (261 aa).

3 helical membrane passes run isoleucine 138–leucine 158, phenylalanine 184–leucine 204, and isoleucine 221–isoleucine 241.

The protein belongs to the CemA family.

The protein localises to the plastid. It localises to the chloroplast inner membrane. The enzyme catalyses K(+)(in) + H(+)(out) = K(+)(out) + H(+)(in). In terms of biological role, contributes to K(+)/H(+) antiport activity by supporting proton efflux to control proton extrusion and homeostasis in chloroplasts in a light-dependent manner to modulate photosynthesis. Prevents excessive induction of non-photochemical quenching (NPQ) under continuous-light conditions. Indirectly promotes efficient inorganic carbon uptake into chloroplasts. This chain is Potassium/proton antiporter CemA, found in Pinus koraiensis (Korean pine).